A 384-amino-acid polypeptide reads, in one-letter code: 8-amino-7-oxononanoate synthase (384 aa).

Arg-21 provides a ligand contact to substrate. 108-109 (GF) is a pyridoxal 5'-phosphate binding site. His-133 is a substrate binding site. Residues Ser-179, His-207, and Thr-233 each contribute to the pyridoxal 5'-phosphate site. Lys-236 carries the post-translational modification N6-(pyridoxal phosphate)lysine. Thr-352 contacts substrate.

This sequence belongs to the class-II pyridoxal-phosphate-dependent aminotransferase family. BioF subfamily. As to quaternary structure, homodimer. Requires pyridoxal 5'-phosphate as cofactor.

The catalysed reaction is 6-carboxyhexanoyl-[ACP] + L-alanine + H(+) = (8S)-8-amino-7-oxononanoate + holo-[ACP] + CO2. Its pathway is cofactor biosynthesis; biotin biosynthesis. In terms of biological role, catalyzes the decarboxylative condensation of pimeloyl-[acyl-carrier protein] and L-alanine to produce 8-amino-7-oxononanoate (AON), [acyl-carrier protein], and carbon dioxide. The sequence is that of 8-amino-7-oxononanoate synthase from Escherichia coli (strain SE11).